The following is a 143-amino-acid chain: Transcriptional regulator MraZ (143 aa).

SpoVT-AbrB domains are found at residues E5–E47 and A76–K119.

This sequence belongs to the MraZ family. In terms of assembly, forms oligomers.

The protein resides in the cytoplasm. It localises to the nucleoid. The sequence is that of Transcriptional regulator MraZ from Syntrophomonas wolfei subsp. wolfei (strain DSM 2245B / Goettingen).